We begin with the raw amino-acid sequence, 209 residues long: Orotate phosphoribosyltransferase (209 aa).

Residues arginine 98, lysine 102, histidine 104, and 124-132 (EDLISTGKS) contribute to the 5-phospho-alpha-D-ribose 1-diphosphate site. Residue serine 128 participates in orotate binding.

The protein belongs to the purine/pyrimidine phosphoribosyltransferase family. PyrE subfamily. Homodimer. It depends on Mg(2+) as a cofactor.

It catalyses the reaction orotidine 5'-phosphate + diphosphate = orotate + 5-phospho-alpha-D-ribose 1-diphosphate. It functions in the pathway pyrimidine metabolism; UMP biosynthesis via de novo pathway; UMP from orotate: step 1/2. Functionally, catalyzes the transfer of a ribosyl phosphate group from 5-phosphoribose 1-diphosphate to orotate, leading to the formation of orotidine monophosphate (OMP). The chain is Orotate phosphoribosyltransferase from Malacoplasma penetrans (strain HF-2) (Mycoplasma penetrans).